Reading from the N-terminus, the 92-residue chain is RNA-binding protein Hfq (92 aa).

The Sm domain maps to 9–68; sequence DPFLNALRRERVPVSIYLVNGIKLQGQVESFDQFVILLKNTVSQMVYKHAISTVVPSRPF.

It belongs to the Hfq family. In terms of assembly, homohexamer.

RNA chaperone that binds small regulatory RNA (sRNAs) and mRNAs to facilitate mRNA translational regulation in response to envelope stress, environmental stress and changes in metabolite concentrations. Also binds with high specificity to tRNAs. This is RNA-binding protein Hfq from Shewanella halifaxensis (strain HAW-EB4).